A 311-amino-acid polypeptide reads, in one-letter code: uncharacterized protein (311 aa).

The chain crosses the membrane as a helical span at residues Phe-168–Val-188.

It is found in the cell membrane. This is an uncharacterized protein from Edwardsiella tarda.